A 280-amino-acid polypeptide reads, in one-letter code: Probable endonuclease 4 (280 aa).

Zn(2+) is bound by residues histidine 69, histidine 109, glutamate 145, aspartate 179, histidine 182, histidine 216, aspartate 229, histidine 231, and glutamate 261.

Belongs to the AP endonuclease 2 family. Zn(2+) serves as cofactor.

It carries out the reaction Endonucleolytic cleavage to 5'-phosphooligonucleotide end-products.. Endonuclease IV plays a role in DNA repair. It cleaves phosphodiester bonds at apurinic or apyrimidinic (AP) sites, generating a 3'-hydroxyl group and a 5'-terminal sugar phosphate. This Actinobacillus pleuropneumoniae serotype 7 (strain AP76) protein is Probable endonuclease 4.